The following is a 183-amino-acid chain: ATP-dependent protease subunit HslV (183 aa).

The active site involves T9. Na(+)-binding residues include A164, C167, and T170.

This sequence belongs to the peptidase T1B family. HslV subfamily. In terms of assembly, a double ring-shaped homohexamer of HslV is capped on each side by a ring-shaped HslU homohexamer. The assembly of the HslU/HslV complex is dependent on binding of ATP.

The protein resides in the cytoplasm. The enzyme catalyses ATP-dependent cleavage of peptide bonds with broad specificity.. Allosterically activated by HslU binding. Protease subunit of a proteasome-like degradation complex believed to be a general protein degrading machinery. In Hydrogenovibrio crunogenus (strain DSM 25203 / XCL-2) (Thiomicrospira crunogena), this protein is ATP-dependent protease subunit HslV.